We begin with the raw amino-acid sequence, 546 residues long: FAD-dependent monooxygenase (546 aa).

The first 17 residues, 1-17 (MYDVIVVGAGWCGLAAA), serve as a signal peptide directing secretion. Position 106 (I106) interacts with FAD. N-linked (GlcNAc...) asparagine glycosylation is found at N239 and N343.

Belongs to the FAD-binding monooxygenase family. FAD serves as cofactor.

Its pathway is antifungal biosynthesis. Functionally, FAD-dependent monooxygenase; part of the gene cluster that mediates the biosynthesis of the tetrahydropyranyl antifungal agent lanomycin that acts as an inhibitor of CYP51 and blocks the ergosterol biosynthesis. The biosynthesis probably begins with the formation of an hexaketide, followed by methionine mediated alkylation of C-2 and C-6, and methylation of the reduced C-3 oxygen, pyran forming reductive ring closure, oxygenation of C-4, beta-keto reduction, enoyl reduction and dehydration of the remaining oxygens, and finally, acylation with glycine to complete the biosynthesis. This chain is FAD-dependent monooxygenase, found in Pyrenophora dematioidea (Helminthosporium dematioideum).